A 499-amino-acid polypeptide reads, in one-letter code: Lysine--tRNA ligase (499 aa).

Glu-408 and Glu-415 together coordinate Mg(2+).

Belongs to the class-II aminoacyl-tRNA synthetase family. As to quaternary structure, homodimer. The cofactor is Mg(2+).

Its subcellular location is the cytoplasm. The catalysed reaction is tRNA(Lys) + L-lysine + ATP = L-lysyl-tRNA(Lys) + AMP + diphosphate. The chain is Lysine--tRNA ligase from Bacillus cytotoxicus (strain DSM 22905 / CIP 110041 / 391-98 / NVH 391-98).